A 349-amino-acid chain; its full sequence is Glycosyltransferase 8 domain-containing protein 2 (349 aa).

At 1–6 (MAFLRK) the chain is on the cytoplasmic side. Residues 7–24 (VNQVLLLLLVLTLCGILY) form a helical; Signal-anchor for type II membrane protein membrane-spanning segment. Topologically, residues 25-349 (KKVHKGAVLK…AGIFKLHHNR (325 aa)) are lumenal. A glycan (N-linked (GlcNAc...) asparagine) is linked at Asn234.

It belongs to the glycosyltransferase 8 family.

It is found in the membrane. In Mus musculus (Mouse), this protein is Glycosyltransferase 8 domain-containing protein 2 (Glt8d2).